A 481-amino-acid polypeptide reads, in one-letter code: ATP synthase subunit beta, chloroplastic (481 aa).

162–169 serves as a coordination point for ATP; sequence GGAGVGKT.

It belongs to the ATPase alpha/beta chains family. In terms of assembly, F-type ATPases have 2 components, CF(1) - the catalytic core - and CF(0) - the membrane proton channel. CF(1) has five subunits: alpha(3), beta(3), gamma(1), delta(1), epsilon(1). CF(0) has four main subunits: a(1), b(1), b'(1) and c(9-12).

It is found in the plastid. Its subcellular location is the chloroplast thylakoid membrane. The enzyme catalyses ATP + H2O + 4 H(+)(in) = ADP + phosphate + 5 H(+)(out). Produces ATP from ADP in the presence of a proton gradient across the membrane. The catalytic sites are hosted primarily by the beta subunits. This chain is ATP synthase subunit beta, chloroplastic, found in Chlorella vulgaris (Green alga).